The sequence spans 478 residues: Methionine aminopeptidase 2-1 (478 aa).

The segment at 1-124 is disordered; it reads MGSKSPEGHN…PRVPLSTLFP (124 aa). A compositionally biased stretch (acidic residues) spans 46–56; sequence NDDDDADDDEK. The segment covering 92-104 has biased composition (basic residues); the sequence is KKKKKRKRSKKKA. Substrate is bound at residue histidine 230. Residues aspartate 251, aspartate 262, and histidine 331 each coordinate a divalent metal cation. Residue histidine 339 participates in substrate binding. Positions 364 and 459 each coordinate a divalent metal cation.

It belongs to the peptidase M24A family. Methionine aminopeptidase eukaryotic type 2 subfamily. Requires Co(2+) as cofactor. Zn(2+) is required as a cofactor. It depends on Mn(2+) as a cofactor. Fe(2+) serves as cofactor.

It is found in the cytoplasm. The catalysed reaction is Release of N-terminal amino acids, preferentially methionine, from peptides and arylamides.. Cotranslationally removes the N-terminal methionine from nascent proteins. The N-terminal methionine is often cleaved when the second residue in the primary sequence is small and uncharged (Met-Ala-, Cys, Gly, Pro, Ser, Thr, or Val). This Aspergillus clavatus (strain ATCC 1007 / CBS 513.65 / DSM 816 / NCTC 3887 / NRRL 1 / QM 1276 / 107) protein is Methionine aminopeptidase 2-1.